A 101-amino-acid polypeptide reads, in one-letter code: DNA-binding protein Fis (101 aa).

A DNA-binding region (H-T-H motif) is located at residues 77 to 96 (QTRAANMLGINRGTLRKKLK).

Belongs to the transcriptional regulatory Fis family. As to quaternary structure, homodimer.

Functionally, activates ribosomal RNA transcription. Plays a direct role in upstream activation of rRNA promoters. In Shewanella amazonensis (strain ATCC BAA-1098 / SB2B), this protein is DNA-binding protein Fis.